Consider the following 78-residue polypeptide: UPF0270 protein PC1_3850 (78 aa).

Belongs to the UPF0270 family.

The chain is UPF0270 protein PC1_3850 from Pectobacterium carotovorum subsp. carotovorum (strain PC1).